The primary structure comprises 301 residues: Tetrapeptide repeat homeobox protein 2 (301 aa).

Disordered stretches follow at residues 1-27 (MQDPGHLQGPPLALDPPRRQRQERTVY) and 273-301 (SLSTTTSQYKEEDGFVDKNHSVPRSLLDL). Composition is skewed to basic and acidic residues over residues 16–26 (PPRRQRQERTV) and 281–292 (YKEEDGFVDKNH). Positions 20–79 (QRQERTVYTESQQKVLEFYFQKDQYPNYDQRLNLAEMLSLREQQLQVWFKNRRAKLARER) form a DNA-binding region, homeobox.

The protein belongs to the paired homeobox family.

It localises to the nucleus. In terms of biological role, transcription factor expressed after fertilization required for zygotic genome activation (ZGA), a critical event in early embryonic development during which the developmental control passes from maternally provided mRNAs to the expression of the zygotic genome after fertilization. Binds and activates expression of key ZGA marker genes, such as NANOGNB, ZSCAN4, DUXB, KLF5 and DPPA3. Binds to regulatory DNA sequences containing a 5'-TAATCC-3' sequence motif. The chain is Tetrapeptide repeat homeobox protein 2 from Homo sapiens (Human).